A 149-amino-acid chain; its full sequence is Transcription antitermination protein NusB (149 aa).

This sequence belongs to the NusB family.

In terms of biological role, involved in transcription antitermination. Required for transcription of ribosomal RNA (rRNA) genes. Binds specifically to the boxA antiterminator sequence of the ribosomal RNA (rrn) operons. The sequence is that of Transcription antitermination protein NusB from Acinetobacter baumannii (strain AB307-0294).